Here is a 65-residue protein sequence, read N- to C-terminus: Large ribosomal subunit protein bL35 (65 aa).

It belongs to the bacterial ribosomal protein bL35 family.

This Aeromonas hydrophila subsp. hydrophila (strain ATCC 7966 / DSM 30187 / BCRC 13018 / CCUG 14551 / JCM 1027 / KCTC 2358 / NCIMB 9240 / NCTC 8049) protein is Large ribosomal subunit protein bL35.